A 278-amino-acid polypeptide reads, in one-letter code: Para-Rep C1 (278 aa).

Residues 1 to 95 (MACSNWVFTR…VAGPWSYGDL (95 aa)) enclose the CRESS-DNA virus Rep endonuclease domain. The RCR-1 signature appears at 8–11 (FTRN). Positions 33 and 39 each coordinate a divalent metal cation. The RCR-2 signature appears at 39–41 (HIQ). The Nuclear localization signal motif lies at 48–69 (KKARFSTVKEIIGGNPHVEKMK). Tyr78 (for DNA cleavage activity) is an active-site residue. The short motif at 78 to 81 (YVQK) is the RCR-3 element. Glu83 contacts a divalent metal cation. A Nuclear localization signal motif is present at residues 95–101 (LLKRGSH). 176 to 178 (GKS) provides a ligand contact to ATP.

The protein belongs to the nanoviridea/circoviridae replication-associated protein family. Homooligomer (Potential). Rep binds to repeated DNA motifs (iterons). The cofactor is Mg(2+). Requires Mn(2+) as cofactor.

The protein resides in the host nucleus. The catalysed reaction is ATP + H2O = ADP + phosphate + H(+). Functionally, initiates and terminates the replication only of its own subviral DNA molecule. The closed circular ssDNA genome is first converted to a superhelical dsDNA. Rep binds a specific hairpin at the genome origin of replication. Introduces an endonucleolytic nick within the intergenic region of the genome, thereby initiating the rolling circle replication (RCR). Following cleavage, binds covalently to the 5'-phosphate of DNA as a tyrosyl ester. The cleavage gives rise to a free 3'-OH that serves as a primer for the cellular DNA polymerase. The polymerase synthesizes the (+) strand DNA by rolling circle mechanism. After one round of replication, a Rep-catalyzed nucleotidyl transfer reaction releases a circular single-stranded virus genome, thereby terminating the replication. Displays origin-specific DNA cleavage, nucleotidyl transferase, ATPase and helicase activities. The sequence is that of Para-Rep C1 (C1) from Faba bean necrotic yellows C1 alphasatellite (FBNYC1A).